Consider the following 422-residue polypeptide: Serine--tRNA ligase (422 aa).

229–231 (TAE) is a binding site for L-serine. Residue 260–262 (RKE) participates in ATP binding. An L-serine-binding site is contributed by glutamate 283. 347 to 350 (EISS) contacts ATP. Serine 383 is an L-serine binding site.

Belongs to the class-II aminoacyl-tRNA synthetase family. Type-1 seryl-tRNA synthetase subfamily. Homodimer. The tRNA molecule binds across the dimer.

The protein resides in the cytoplasm. The catalysed reaction is tRNA(Ser) + L-serine + ATP = L-seryl-tRNA(Ser) + AMP + diphosphate + H(+). It carries out the reaction tRNA(Sec) + L-serine + ATP = L-seryl-tRNA(Sec) + AMP + diphosphate + H(+). It functions in the pathway aminoacyl-tRNA biosynthesis; selenocysteinyl-tRNA(Sec) biosynthesis; L-seryl-tRNA(Sec) from L-serine and tRNA(Sec): step 1/1. Its function is as follows. Catalyzes the attachment of serine to tRNA(Ser). Is also able to aminoacylate tRNA(Sec) with serine, to form the misacylated tRNA L-seryl-tRNA(Sec), which will be further converted into selenocysteinyl-tRNA(Sec). This is Serine--tRNA ligase from Natranaerobius thermophilus (strain ATCC BAA-1301 / DSM 18059 / JW/NM-WN-LF).